A 497-amino-acid polypeptide reads, in one-letter code: Cysteine--tRNA ligase (497 aa).

Cys34 is a Zn(2+) binding site. The 'HIGH' region motif lies at Pro36–Asn46. 3 residues coordinate Zn(2+): Cys243, His268, and Glu272. The 'KMSKS' region signature appears at Lys301 to Ser305. An ATP-binding site is contributed by Lys304. Residues Leu478–Arg497 are disordered. Basic and acidic residues predominate over residues Asp480–Arg497.

This sequence belongs to the class-I aminoacyl-tRNA synthetase family. Monomer. Zn(2+) serves as cofactor.

The protein resides in the cytoplasm. The enzyme catalyses tRNA(Cys) + L-cysteine + ATP = L-cysteinyl-tRNA(Cys) + AMP + diphosphate. The chain is Cysteine--tRNA ligase from Chelativorans sp. (strain BNC1).